A 453-amino-acid polypeptide reads, in one-letter code: Ribosomal protein uS12 methylthiotransferase RimO (453 aa).

In terms of domain architecture, MTTase N-terminal spans 5 to 120; it reads PKVGFVSLGC…VMQAVHSHLP (116 aa). Residues C14, C50, C79, C151, C155, and C158 each coordinate [4Fe-4S] cluster. The Radical SAM core domain maps to 137–382; the sequence is LTPRHYAYLK…MEVAEEVSAR (246 aa). The 69-residue stretch at 385 to 453 folds into the TRAM domain; that stretch reads QRKVGKTLKV…ADGHDLWGEV (69 aa).

This sequence belongs to the methylthiotransferase family. RimO subfamily. [4Fe-4S] cluster is required as a cofactor.

Its subcellular location is the cytoplasm. The catalysed reaction is L-aspartate(89)-[ribosomal protein uS12]-hydrogen + (sulfur carrier)-SH + AH2 + 2 S-adenosyl-L-methionine = 3-methylsulfanyl-L-aspartate(89)-[ribosomal protein uS12]-hydrogen + (sulfur carrier)-H + 5'-deoxyadenosine + L-methionine + A + S-adenosyl-L-homocysteine + 2 H(+). In terms of biological role, catalyzes the methylthiolation of an aspartic acid residue of ribosomal protein uS12. The sequence is that of Ribosomal protein uS12 methylthiotransferase RimO from Burkholderia vietnamiensis (strain G4 / LMG 22486) (Burkholderia cepacia (strain R1808)).